Reading from the N-terminus, the 222-residue chain is Small ribosomal subunit protein eS1 (222 aa).

The protein belongs to the eukaryotic ribosomal protein eS1 family.

This chain is Small ribosomal subunit protein eS1, found in Methanocaldococcus jannaschii (strain ATCC 43067 / DSM 2661 / JAL-1 / JCM 10045 / NBRC 100440) (Methanococcus jannaschii).